The sequence spans 443 residues: Tryptophan synthase beta chain 2, chloroplastic (443 aa).

The interval 1-32 (PGPPPPAPEGRRRRGRGRNAAGQAVAAEASPA) is disordered. The transit peptide at 1 to 45 (PGPPPPAPEGRRRRGRGRNAAGQAVAAEASPAAVEMGNGAAAPGL) directs the protein to the chloroplast. Over residues 18-32 (RNAAGQAVAAEASPA) the composition is skewed to low complexity. Lys-138 is modified (N6-(pyridoxal phosphate)lysine).

Belongs to the TrpB family. As to quaternary structure, tetramer of two alpha and two beta chains. It depends on pyridoxal 5'-phosphate as a cofactor.

It is found in the plastid. The protein localises to the chloroplast. It catalyses the reaction (1S,2R)-1-C-(indol-3-yl)glycerol 3-phosphate + L-serine = D-glyceraldehyde 3-phosphate + L-tryptophan + H2O. It functions in the pathway amino-acid biosynthesis; L-tryptophan biosynthesis; L-tryptophan from chorismate: step 5/5. In terms of biological role, the beta subunit is responsible for the synthesis of L-tryptophan from indole and L-serine. The chain is Tryptophan synthase beta chain 2, chloroplastic (TSB2) from Zea mays (Maize).